The primary structure comprises 203 residues: Ribosomal RNA large subunit methyltransferase E (203 aa).

Residues Gly-51, Trp-53, Asp-69, Asp-85, and Asp-108 each coordinate S-adenosyl-L-methionine. Lys-148 functions as the Proton acceptor in the catalytic mechanism.

The protein belongs to the class I-like SAM-binding methyltransferase superfamily. RNA methyltransferase RlmE family.

Its subcellular location is the cytoplasm. The catalysed reaction is uridine(2552) in 23S rRNA + S-adenosyl-L-methionine = 2'-O-methyluridine(2552) in 23S rRNA + S-adenosyl-L-homocysteine + H(+). Specifically methylates the uridine in position 2552 of 23S rRNA at the 2'-O position of the ribose in the fully assembled 50S ribosomal subunit. In Methanosphaerula palustris (strain ATCC BAA-1556 / DSM 19958 / E1-9c), this protein is Ribosomal RNA large subunit methyltransferase E.